A 190-amino-acid chain; its full sequence is Small ribosomal subunit protein eS7x (190 aa).

Met-1 carries the post-translational modification N-acetylmethionine. Residues 17-50 (TECEEQVAQALFDLENTNQELKSELKDLYINQAV) adopt a coiled-coil conformation.

This sequence belongs to the eukaryotic ribosomal protein eS7 family.

In Arabidopsis thaliana (Mouse-ear cress), this protein is Small ribosomal subunit protein eS7x (RPS7C).